The chain runs to 151 residues: Ubiquitin-conjugating enzyme E2 2 (151 aa).

A disordered region spans residues 1–26; the sequence is MSTTARRRLMRDFKRMQQDPPQGVSA. The UBC core domain occupies 4 to 150; it reads TARRRLMRDF…VRDTVEASWT (147 aa). Cysteine 88 functions as the Glycyl thioester intermediate in the catalytic mechanism.

Belongs to the ubiquitin-conjugating enzyme family.

It localises to the cytoplasm. The protein localises to the nucleus. It catalyses the reaction S-ubiquitinyl-[E1 ubiquitin-activating enzyme]-L-cysteine + [E2 ubiquitin-conjugating enzyme]-L-cysteine = [E1 ubiquitin-activating enzyme]-L-cysteine + S-ubiquitinyl-[E2 ubiquitin-conjugating enzyme]-L-cysteine.. It functions in the pathway protein modification; protein ubiquitination. Functionally, catalyzes the covalent attachment of ubiquitin to other proteins. Plays a role in transcription regulation by catalyzing the monoubiquitination of histone H2B to form H2BK123ub1. H2BK123ub1 gives a specific tag for epigenetic transcriptional activation and is also a prerequisite for H3K4me and H3K79me formation. Also involved in postreplication repair of UV-damaged DNA, in N-end rule-dependent protein degradation and in sporulation. In Yarrowia lipolytica (strain CLIB 122 / E 150) (Yeast), this protein is Ubiquitin-conjugating enzyme E2 2 (UBC2).